Reading from the N-terminus, the 273-residue chain is 4-hydroxy-tetrahydrodipicolinate reductase (273 aa).

NAD(+) is bound by residues 12 to 17 and Glu-38; that span reads GAGGRM. Residue Arg-39 participates in NADP(+) binding. NAD(+)-binding positions include 102-104 and 126-129; these read GTT and AANF. The active-site Proton donor/acceptor is the His-159. A (S)-2,3,4,5-tetrahydrodipicolinate-binding site is contributed by His-160. Lys-163 functions as the Proton donor in the catalytic mechanism. Position 169-170 (169-170) interacts with (S)-2,3,4,5-tetrahydrodipicolinate; it reads GT.

It belongs to the DapB family. In terms of assembly, homotetramer.

The protein resides in the cytoplasm. It catalyses the reaction (S)-2,3,4,5-tetrahydrodipicolinate + NAD(+) + H2O = (2S,4S)-4-hydroxy-2,3,4,5-tetrahydrodipicolinate + NADH + H(+). The enzyme catalyses (S)-2,3,4,5-tetrahydrodipicolinate + NADP(+) + H2O = (2S,4S)-4-hydroxy-2,3,4,5-tetrahydrodipicolinate + NADPH + H(+). It functions in the pathway amino-acid biosynthesis; L-lysine biosynthesis via DAP pathway; (S)-tetrahydrodipicolinate from L-aspartate: step 4/4. Catalyzes the conversion of 4-hydroxy-tetrahydrodipicolinate (HTPA) to tetrahydrodipicolinate. The polypeptide is 4-hydroxy-tetrahydrodipicolinate reductase (Klebsiella pneumoniae subsp. pneumoniae (strain ATCC 700721 / MGH 78578)).